We begin with the raw amino-acid sequence, 606 residues long: Gamma-aminobutyric acid receptor subunit beta (606 aa).

Positions 1–44 (MSDSKMDKLARMAPLPRTPLLTIWLAINMALIAQETGHKRIHTV) are cleaved as a signal peptide. Over 45–268 (QAATGGGSML…CEIQFVRSMG (224 aa)) the chain is Extracellular. Asn-58 is a glycosylation site (N-linked (GlcNAc...) asparagine). An intrachain disulfide couples Cys-185 to Cys-199. Asn-253 is a glycosylation site (N-linked (GlcNAc...) asparagine). A run of 3 helical transmembrane segments spans residues 269–291 (YYLI…SFWL), 297–316 (PARV…LMSS), and 333–356 (YLGT…YMAK). Over 357–568 (RIQMRKQRFM…LGITPSDIDK (212 aa)) the chain is Cytoplasmic. Disordered stretches follow at residues 376-451 (KQQL…VSNR) and 482-542 (HDPK…AAVP). The segment covering 381–395 (GANQQQANPNPNANV) has biased composition (low complexity). Gly residues predominate over residues 396-425 (GGPGGVGVGPGGPGGPGGGVNVGVGMGMGP). A compositionally biased stretch (basic residues) spans 430–443 (GHGHHAHSHGHPHA). Residues 499 to 536 (GGRGGPQSHGPGPGQGGGPPGGGGGGGGGGGPPEGGGD) are compositionally biased toward gly residues. The chain crosses the membrane as a helical span at residues 569 to 590 (YSRIVFPVCFVCFNLMYWIIYL).

Belongs to the ligand-gated ion channel (TC 1.A.9) family. Gamma-aminobutyric acid receptor (TC 1.A.9.5) subfamily.

It is found in the postsynaptic cell membrane. Its subcellular location is the cell membrane. Its function is as follows. GABA, an inhibitory neurotransmitter, mediates neuronal inhibition by binding to the GABA receptor and opening an integral chloride channel. This chain is Gamma-aminobutyric acid receptor subunit beta (Rdl), found in Drosophila simulans (Fruit fly).